The chain runs to 173 residues: MTYFVIFLGVCFMLGTLAVASNPSPYYGVVGLVLASVVGCGWLVNLGVSFVSLVLFMIYLGGMLVVFVYSVSLAADPYPEAWGSWRVMGYGLGFVLVVCMGMGLGGFVDFWKIGVTTVDSGGMSFVRLDFGGVAAFYSYGVGLFLVAGWGLLLVLFVVLELVRGLSRGAIRAV.

The next 5 helical transmembrane spans lie at 1–21 (MTYF…AVAS), 27–47 (YGVV…VNLG), 48–68 (VSFV…VVFV), 87–107 (VMGY…LGGF), and 139–159 (YGVG…FVVL).

This sequence belongs to the complex I subunit 6 family.

The protein resides in the mitochondrion membrane. The catalysed reaction is a ubiquinone + NADH + 5 H(+)(in) = a ubiquinol + NAD(+) + 4 H(+)(out). In terms of biological role, core subunit of the mitochondrial membrane respiratory chain NADH dehydrogenase (Complex I) that is believed to belong to the minimal assembly required for catalysis. Complex I functions in the transfer of electrons from NADH to the respiratory chain. The immediate electron acceptor for the enzyme is believed to be ubiquinone. The protein is NADH-ubiquinone oxidoreductase chain 6 (MT-ND6) of Coturnix japonica (Japanese quail).